The primary structure comprises 255 residues: 2-succinyl-6-hydroxy-2,4-cyclohexadiene-1-carboxylate synthase (255 aa).

Belongs to the AB hydrolase superfamily. MenH family. Monomer.

It catalyses the reaction 5-enolpyruvoyl-6-hydroxy-2-succinyl-cyclohex-3-ene-1-carboxylate = (1R,6R)-6-hydroxy-2-succinyl-cyclohexa-2,4-diene-1-carboxylate + pyruvate. The protein operates within quinol/quinone metabolism; 1,4-dihydroxy-2-naphthoate biosynthesis; 1,4-dihydroxy-2-naphthoate from chorismate: step 3/7. Its pathway is quinol/quinone metabolism; menaquinone biosynthesis. Functionally, catalyzes a proton abstraction reaction that results in 2,5-elimination of pyruvate from 2-succinyl-5-enolpyruvyl-6-hydroxy-3-cyclohexene-1-carboxylate (SEPHCHC) and the formation of 2-succinyl-6-hydroxy-2,4-cyclohexadiene-1-carboxylate (SHCHC). This is 2-succinyl-6-hydroxy-2,4-cyclohexadiene-1-carboxylate synthase from Serratia proteamaculans (strain 568).